We begin with the raw amino-acid sequence, 169 residues long: Transcription antitermination protein NusB (169 aa).

The segment covering 1–19 has biased composition (basic and acidic residues); that stretch reads MAEMKKTIDNKPAPKGEKK. The interval 1–22 is disordered; the sequence is MAEMKKTIDNKPAPKGEKKANR.

This sequence belongs to the NusB family.

Functionally, involved in transcription antitermination. Required for transcription of ribosomal RNA (rRNA) genes. Binds specifically to the boxA antiterminator sequence of the ribosomal RNA (rrn) operons. The chain is Transcription antitermination protein NusB from Rhodopseudomonas palustris (strain BisB18).